The chain runs to 229 residues: Ribonuclease 3 (229 aa).

The region spanning 5–127 (LSRLERQLGY…LIGAIYLDAG (123 aa)) is the RNase III domain. A Mg(2+)-binding site is contributed by Glu-40. Asp-44 is a catalytic residue. 2 residues coordinate Mg(2+): Asp-113 and Glu-116. The active site involves Glu-116. In terms of domain architecture, DRBM spans 154–224 (DPKTRLQEFL…AAAALIALGV (71 aa)).

Belongs to the ribonuclease III family. In terms of assembly, homodimer. Mg(2+) serves as cofactor.

The protein resides in the cytoplasm. The enzyme catalyses Endonucleolytic cleavage to 5'-phosphomonoester.. Digests double-stranded RNA. Involved in the processing of primary rRNA transcript to yield the immediate precursors to the large and small rRNAs (23S and 16S). Processes some mRNAs, and tRNAs when they are encoded in the rRNA operon. Processes pre-crRNA and tracrRNA of type II CRISPR loci if present in the organism. This is Ribonuclease 3 from Pseudomonas syringae pv. syringae (strain B728a).